Reading from the N-terminus, the 444-residue chain is Trigger factor (444 aa).

The PPIase FKBP-type domain maps to 185–270 (GDKLIIDFEG…VNEIQIAKDF (86 aa)).

It belongs to the FKBP-type PPIase family. Tig subfamily.

The protein localises to the cytoplasm. The enzyme catalyses [protein]-peptidylproline (omega=180) = [protein]-peptidylproline (omega=0). Its function is as follows. Involved in protein export. Acts as a chaperone by maintaining the newly synthesized protein in an open conformation. Functions as a peptidyl-prolyl cis-trans isomerase. This is Trigger factor from Wolbachia pipientis wMel.